A 146-amino-acid polypeptide reads, in one-letter code: UPF0306 protein CKO_04548 (146 aa).

This sequence belongs to the UPF0306 family.

The protein is UPF0306 protein CKO_04548 of Citrobacter koseri (strain ATCC BAA-895 / CDC 4225-83 / SGSC4696).